Consider the following 316-residue polypeptide: Pantothenate kinase (316 aa).

95 to 102 (GSVAVGKS) contributes to the ATP binding site.

This sequence belongs to the prokaryotic pantothenate kinase family.

It is found in the cytoplasm. It catalyses the reaction (R)-pantothenate + ATP = (R)-4'-phosphopantothenate + ADP + H(+). It functions in the pathway cofactor biosynthesis; coenzyme A biosynthesis; CoA from (R)-pantothenate: step 1/5. This chain is Pantothenate kinase, found in Hamiltonella defensa subsp. Acyrthosiphon pisum (strain 5AT).